The following is a 210-amino-acid chain: Proteasome subunit beta (210 aa).

The propeptide at 1–9 (MDNDKHLKG) is removed in mature form; by autocatalysis. Thr-10 acts as the Nucleophile in catalysis.

This sequence belongs to the peptidase T1B family. As to quaternary structure, the 20S proteasome core is composed of 14 alpha and 14 beta subunits that assemble into four stacked heptameric rings, resulting in a barrel-shaped structure. The two inner rings, each composed of seven catalytic beta subunits, are sandwiched by two outer rings, each composed of seven alpha subunits. The catalytic chamber with the active sites is on the inside of the barrel. Has a gated structure, the ends of the cylinder being occluded by the N-termini of the alpha-subunits. Is capped at one or both ends by the proteasome regulatory ATPase, PAN.

It localises to the cytoplasm. It carries out the reaction Cleavage of peptide bonds with very broad specificity.. The formation of the proteasomal ATPase PAN-20S proteasome complex, via the docking of the C-termini of PAN into the intersubunit pockets in the alpha-rings, triggers opening of the gate for substrate entry. Interconversion between the open-gate and close-gate conformations leads to a dynamic regulation of the 20S proteasome proteolysis activity. Functionally, component of the proteasome core, a large protease complex with broad specificity involved in protein degradation. This Methanococcoides burtonii (strain DSM 6242 / NBRC 107633 / OCM 468 / ACE-M) protein is Proteasome subunit beta.